We begin with the raw amino-acid sequence, 279 residues long: Movement protein (279 aa).

Residues E247–L279 form a disordered region. The segment covering E254–S268 has biased composition (low complexity).

The protein belongs to the cucumovirus movement protein family.

The protein resides in the host cell junction. It is found in the host plasmodesma. Functionally, transports viral genome to neighboring plant cells directly through plasmosdesmata, without any budding. The movement protein allows efficient cell to cell propagation, by bypassing the host cell wall barrier. Acts by forming a tubular structure at the host plasmodesmata, enlarging it enough to allow free passage of virion capsids. The sequence is that of Movement protein from Cucumis sativus (Cucumber).